Reading from the N-terminus, the 524-residue chain is Thioredoxin reductase 2, mitochondrial (524 aa).

A mitochondrion-targeting transit peptide spans 1–34; sequence MVAAMVAALRGPSRRFRPRTRALTRGTRGAASAA. 41–70 is an FAD binding site; that stretch reads DLLVIGGGSGGLACAKEAAQLGKKVAVADY. Lysine 79 carries the N6-succinyllysine modification. Cysteine 86 and cysteine 91 are joined by a disulfide. 2 positions are modified to N6-succinyllysine: lysine 175 and lysine 329. The Proton acceptor role is filled by histidine 497. Residues 522–523 constitute a cross-link (cysteinyl-selenocysteine (Cys-Sec)); sequence CU. Residue selenocysteine 523 is a non-standard amino acid, selenocysteine.

This sequence belongs to the class-I pyridine nucleotide-disulfide oxidoreductase family. In terms of assembly, homodimer. The cofactor is FAD. As to expression, expressed in liver, heart, testis and kidney.

It localises to the mitochondrion. It catalyses the reaction [thioredoxin]-dithiol + NADP(+) = [thioredoxin]-disulfide + NADPH + H(+). In terms of biological role, involved in the control of reactive oxygen species levels and the regulation of mitochondrial redox homeostasis. Maintains thioredoxin in a reduced state. May play a role in redox-regulated cell signaling. This chain is Thioredoxin reductase 2, mitochondrial, found in Mus musculus (Mouse).